The primary structure comprises 675 residues: Transketolase, chloroplastic (675 aa).

Residues H78 and 127-129 each bind thiamine diphosphate; that span reads GPL. D168 contributes to the Mg(2+) binding site. The thiamine diphosphate site is built by G169, E173, and N198. Mg(2+) is bound by residues N198 and I200. H275 provides a ligand contact to thiamine diphosphate. Residues H275, R369, and S396 each contribute to the substrate site. Thiamine diphosphate-binding positions include E423 and 450–453; that span reads FTDY. Residue E423 is the Proton donor of the active site. The substrate site is built by H474, D482, and R533.

Homodimer. Mg(2+) serves as cofactor. The cofactor is Ca(2+). Mn(2+) is required as a cofactor. Requires Co(2+) as cofactor. It depends on thiamine diphosphate as a cofactor.

It is found in the plastid. The protein localises to the chloroplast thylakoid membrane. The enzyme catalyses D-sedoheptulose 7-phosphate + D-glyceraldehyde 3-phosphate = aldehydo-D-ribose 5-phosphate + D-xylulose 5-phosphate. The protein operates within carbohydrate biosynthesis; Calvin cycle. Its function is as follows. Catalyzes the reversible transfer of a two-carbon ketol group from fructose-6-phosphate or sedoheptulose-7-phosphate to glyceraldehyde-3-phosphate to yield xylulose-5-phosphate and erythrose-4-phosphate or ribose-5-phosphate, respectively. This Zea mays (Maize) protein is Transketolase, chloroplastic.